Reading from the N-terminus, the 506-residue chain is Probable cytochrome P450 519E1 (506 aa).

A helical membrane pass occupies residues 1-21 (MGIGLIILYLLIGLLAYDFTK). Cys453 is a binding site for heme.

This sequence belongs to the cytochrome P450 family. Requires heme as cofactor.

The protein localises to the membrane. The chain is Probable cytochrome P450 519E1 (cyp519E1) from Dictyostelium discoideum (Social amoeba).